Consider the following 204-residue polypeptide: CASP-like protein 3A1 (204 aa).

Over Met1–Val39 the chain is Cytoplasmic. The helical transmembrane segment at Val40–Ile60 threads the bilayer. Residues Ser61 to Glu88 lie on the Extracellular side of the membrane. Asn80 carries N-linked (GlcNAc...) asparagine glycosylation. A helical transmembrane segment spans residues Tyr89–Ala109. At His110 to Tyr124 the chain is on the cytoplasmic side. Residues Ala125–Ala145 traverse the membrane as a helical segment. The Extracellular portion of the chain corresponds to Ala146–Ser179. Asn153 is a glycosylation site (N-linked (GlcNAc...) asparagine). Residues Ile180–Trp200 traverse the membrane as a helical segment. Topologically, residues Leu201–Met204 are cytoplasmic.

It belongs to the Casparian strip membrane proteins (CASP) family. As to quaternary structure, homodimer and heterodimers.

Its subcellular location is the cell membrane. This is CASP-like protein 3A1 from Oryza sativa subsp. indica (Rice).